Consider the following 146-residue polypeptide: Transcription antitermination protein NusB (146 aa).

This sequence belongs to the NusB family.

Involved in transcription antitermination. Required for transcription of ribosomal RNA (rRNA) genes. Binds specifically to the boxA antiterminator sequence of the ribosomal RNA (rrn) operons. In Koribacter versatilis (strain Ellin345), this protein is Transcription antitermination protein NusB.